The sequence spans 118 residues: Aspartate 1-decarboxylase (118 aa).

The Schiff-base intermediate with substrate; via pyruvic acid role is filled by Ser-25. Ser-25 is modified (pyruvic acid (Ser)). Thr-57 is a binding site for substrate. Tyr-58 (proton donor) is an active-site residue. 73-75 contributes to the substrate binding site; that stretch reads GAA.

The protein belongs to the PanD family. Heterooctamer of four alpha and four beta subunits. Pyruvate is required as a cofactor. Is synthesized initially as an inactive proenzyme, which is activated by self-cleavage at a specific serine bond to produce a beta-subunit with a hydroxyl group at its C-terminus and an alpha-subunit with a pyruvoyl group at its N-terminus.

It localises to the cytoplasm. It carries out the reaction L-aspartate + H(+) = beta-alanine + CO2. It participates in cofactor biosynthesis; (R)-pantothenate biosynthesis; beta-alanine from L-aspartate: step 1/1. Catalyzes the pyruvoyl-dependent decarboxylation of aspartate to produce beta-alanine. The protein is Aspartate 1-decarboxylase of Caulobacter vibrioides (strain ATCC 19089 / CIP 103742 / CB 15) (Caulobacter crescentus).